We begin with the raw amino-acid sequence, 237 residues long: Uridylate kinase (237 aa).

Residue Lys-11 to Gly-14 participates in ATP binding. Position 53 (Gly-53) interacts with UMP. 2 residues coordinate ATP: Gly-54 and Arg-58. Residues Asp-73 and Thr-134–Thr-141 each bind UMP. The ATP site is built by Thr-161, Tyr-167, and Asp-170.

The protein belongs to the UMP kinase family. Homohexamer.

It is found in the cytoplasm. It carries out the reaction UMP + ATP = UDP + ADP. The protein operates within pyrimidine metabolism; CTP biosynthesis via de novo pathway; UDP from UMP (UMPK route): step 1/1. Its activity is regulated as follows. Inhibited by UTP. Its function is as follows. Catalyzes the reversible phosphorylation of UMP to UDP. The sequence is that of Uridylate kinase from Burkholderia mallei (strain NCTC 10247).